A 395-amino-acid polypeptide reads, in one-letter code: Capsid protein (395 aa).

Basic residues predominate over residues 1–41 (MARKYAKRSKSRPRTARRSPKSRSRPRSRAPRRKAPSRPRI). The interval 1 to 51 (MARKYAKRSKSRPRTARRSPKSRSRPRSRAPRRKAPSRPRIQRVNPVRRPM) is disordered. The Nuclear localization signal signature appears at 2-9 (ARKYAKRS).

Its subcellular location is the host nucleus. It is found in the virion. In terms of biological role, self-assembles to form the virion icosahedral capsid. The polypeptide is Capsid protein (Chaetoceros setoense (Chaetoceros setoense DNA virus)).